Reading from the N-terminus, the 289-residue chain is Bifunctional protein FolD (289 aa).

NADP(+) is bound by residues 166–168 (GRS), Ser-191, and Ile-232.

This sequence belongs to the tetrahydrofolate dehydrogenase/cyclohydrolase family. Homodimer.

The enzyme catalyses (6R)-5,10-methylene-5,6,7,8-tetrahydrofolate + NADP(+) = (6R)-5,10-methenyltetrahydrofolate + NADPH. It carries out the reaction (6R)-5,10-methenyltetrahydrofolate + H2O = (6R)-10-formyltetrahydrofolate + H(+). Its pathway is one-carbon metabolism; tetrahydrofolate interconversion. Catalyzes the oxidation of 5,10-methylenetetrahydrofolate to 5,10-methenyltetrahydrofolate and then the hydrolysis of 5,10-methenyltetrahydrofolate to 10-formyltetrahydrofolate. This Synechococcus elongatus (strain ATCC 33912 / PCC 7942 / FACHB-805) (Anacystis nidulans R2) protein is Bifunctional protein FolD.